Reading from the N-terminus, the 198-residue chain is CXXC-type zinc finger protein 4 (198 aa).

Positions 114 to 134 (NHSSSSSSSSGGAGGANPAKK) are disordered. The segment at 132–173 (AKKKRKRCGVCVPCKRLINCGVCSSCRNRKTGHQICKFRKCE) adopts a CXXC-type zinc-finger fold. Zn(2+)-binding residues include cysteine 139, cysteine 142, cysteine 145, cysteine 151, cysteine 154, and cysteine 157. The interval 161–166 (KTGHQI) is interaction with DVL1. Zn(2+) contacts are provided by cysteine 167 and cysteine 172.

As to quaternary structure, interacts with the PDZ domain of DVL1.

It localises to the cytoplasm. Acts as a negative regulator of the Wnt signaling pathway via its interaction with DVL1. Binds preferentially to DNA containing cytidine-phosphate-guanosine (CpG) dinucleotides over CpH (H=A, T, and C), hemimethylated-CpG and hemimethylated-hydroxymethyl-CpG. This Homo sapiens (Human) protein is CXXC-type zinc finger protein 4 (CXXC4).